The sequence spans 807 residues: Dynein axonemal intermediate chain 4 (807 aa).

Polar residues-rich tracts occupy residues 1 to 11 (MHSSPTSTRKQ) and 22 to 31 (PRKSISFINP). 2 disordered regions span residues 1–44 (MHSS…AASN) and 300–320 (YSSK…DSES). Positions 32-43 (SKSSAGKGYAAS) are enriched in low complexity. Basic and acidic residues predominate over residues 308–317 (AKDRDPKIQD). WD repeat units follow at residues 493–533 (QSSY…NIPV), 542–590 (KHLG…DCHD), 617–657 (SRQA…QYLE), 661–701 (GHKG…PFLS), 704–743 (PTTY…LDPL), and 749–788 (NPGI…TASD).

Part of the multisubunit axonemal dynein complex formed at least of two heavy chains and a number of intermediate and light chains. Associated with axonemal dynein subunits such as, DNAH2, DNAI3, and DYNLT1. Interacts with DYNLT1. In terms of tissue distribution, highly expressed in tissues containing motile cilia, including the trachea, lung, oviduct, and testis.

Its subcellular location is the cytoplasm. The protein localises to the cytoskeleton. The protein resides in the flagellum axoneme. It localises to the cilium axoneme. It is found in the dynein axonemal particle. Functionally, plays a critical role in the assembly of axonemal dynein complex, thereby playing a role in ciliary motility. This Mus musculus (Mouse) protein is Dynein axonemal intermediate chain 4 (Dnai4).